The following is a 2355-amino-acid chain: Acetyl-CoA carboxylase 2 (2355 aa).

The 508-residue stretch at 138-645 (PIHSILVATN…HTGWLDSRIA (508 aa)) folds into the Biotin carboxylation domain. The ATP-grasp domain occupies 291–485 (GRSLVTVPEE…AAQVAVGMGI (195 aa)). 317 to 374 (CQVVGYPAMIKASWGGGGKGIRKVHNDDEVRALFKQVQGEVPGSPIFIMKVASQSRHL) is a binding site for ATP. Residues glutamate 440, glutamate 454, and asparagine 456 each contribute to the Mg(2+) site. Residues glutamate 440, glutamate 454, and asparagine 456 each contribute to the Mn(2+) site. The active site involves arginine 458. The region spanning 772 to 846 (LQNDHDPSKL…QAGELIAKLD (75 aa)) is the Biotinyl-binding domain. The residue at position 813 (lysine 813) is an N6-biotinyllysine. Residue threonine 1133 is modified to Phosphothreonine. Serine 1293 carries the post-translational modification Phosphoserine. The region spanning 1593–1932 (QYKPLNNLDR…YVGGPLPVLA (340 aa)) is the CoA carboxyltransferase N-terminal domain. Residues 1593–2251 (QYKPLNNLDR…ESSLVRNIRK (659 aa)) form a carboxyltransferase region. The CoA site is built by arginine 1841, lysine 2142, and arginine 2144. The 316-residue stretch at 1936 to 2251 (PPERTVEYIP…ESSLVRNIRK (316 aa)) folds into the CoA carboxyltransferase C-terminal domain.

Homodimer. It depends on biotin as a cofactor. Requires Mg(2+) as cofactor. Mn(2+) serves as cofactor. Widely expressed at low levels.

The protein localises to the cytoplasm. The protein resides in the cytosol. It catalyses the reaction hydrogencarbonate + acetyl-CoA + ATP = malonyl-CoA + ADP + phosphate + H(+). It carries out the reaction N(6)-biotinyl-L-lysyl-[protein] + hydrogencarbonate + ATP = N(6)-carboxybiotinyl-L-lysyl-[protein] + ADP + phosphate + H(+). Its pathway is lipid metabolism; malonyl-CoA biosynthesis; malonyl-CoA from acetyl-CoA: step 1/1. In terms of biological role, multifunctional enzyme that catalyzes the carboxylation of acetyl-CoA, forming malonyl-CoA, which is used in the plastid for fatty acid synthesis and in the cytosol in various biosynthetic pathways including fatty acid elongation. The protein is Acetyl-CoA carboxylase 2 (ACC2) of Arabidopsis thaliana (Mouse-ear cress).